We begin with the raw amino-acid sequence, 537 residues long: Tegument protein BRRF2 (537 aa).

Disordered stretches follow at residues 325–474 and 486–537; these read LALP…EAQD and GLRV…LSVI. Positions 334–347 are enriched in polar residues; the sequence is KPQQTCSQLTSRGN. The segment covering 423–441 has biased composition (low complexity); sequence SSQAAPSSSSVAPVASLSG. The span at 492–517 shows a compositional bias: acidic residues; sequence DEDEDGSEDGEFSDLDLSDSDHEGDE.

It belongs to the lymphocryptovirus BRRF2 family.

The protein localises to the virion tegument. The chain is Tegument protein BRRF2 from Homo sapiens (Human).